Reading from the N-terminus, the 192-residue chain is Protein FAM169BP (192 aa).

The disordered stretch occupies residues 121–192; that stretch reads YQAHPGNSED…PPGKLTRSSP (72 aa). Acidic residues predominate over residues 159–177; sequence EELEDTKDDPECGVEEEDA.

Belongs to the FAM169 family.

This chain is Protein FAM169BP, found in Homo sapiens (Human).